A 350-amino-acid chain; its full sequence is Beta-ketodecanoyl-[acyl-carrier-protein] synthase (350 aa).

Cys-133 is a catalytic residue.

This sequence belongs to the thiolase-like superfamily. Beta-ketoacyl-ACP synthases family.

It catalyses the reaction octanoyl-CoA + malonyl-[ACP] + H(+) = 3-oxodecanoyl-[ACP] + CO2 + CoA. It functions in the pathway lipid metabolism; fatty acid biosynthesis. Catalyzes the condensation of octanoyl-CoA, obtained from exogenously supplied fatty acids via beta-oxidation, with malonyl-[acyl-carrier protein], forming 3-oxodecanoyl-[acyl-carrier protein], an intermediate of the fatty acid elongation cycle that can then be extended to supply all of the cellular fatty acid needs. The enzyme thereby shunts fatty acid degradation intermediates from the beta-oxidation pathway into de novo fatty acid biosynthesis. The sequence is that of Beta-ketodecanoyl-[acyl-carrier-protein] synthase from Pseudomonas aeruginosa (strain ATCC 15692 / DSM 22644 / CIP 104116 / JCM 14847 / LMG 12228 / 1C / PRS 101 / PAO1).